The sequence spans 719 residues: Solute carrier family 15 member 2 (719 aa).

The Cytoplasmic portion of the chain corresponds to 1 to 43 (MGKMKDKDVDAEKYEKAQRSPKLCGTNYPVSIAFIVVNEFCER). Residues 44 to 61 (FSYYGMKAVLTLYFMNYL) traverse the membrane as a helical segment. At 62-69 (HWDKNLST) the chain is on the extracellular side. Asn66 carries N-linked (GlcNAc...) asparagine glycosylation. Residues 70 to 90 (AIYHAFSGLCYFTPLLGALIA) traverse the membrane as a helical segment. The Cytoplasmic portion of the chain corresponds to 91 to 99 (DSWLGKFKT). A helical membrane pass occupies residues 100–120 (IIYLSIVYVIGHVVKSVGAIP). Topologically, residues 121-125 (DVGDS) are extracellular. Residues 126–146 (TVHIALSMVGLGLIALGTGGI) traverse the membrane as a helical segment. The Cytoplasmic portion of the chain corresponds to 147–169 (KPCVAAFGGDQFDEDNIDERRKF). A helical transmembrane segment spans residues 170–190 (FSIFYMSINAGSVLSTIITPI). The Extracellular portion of the chain corresponds to 191–201 (LRGDVQCFGGD). A helical membrane pass occupies residues 202-222 (CYALAFGVPAALMVIALVVFI). Topologically, residues 223-280 (SGSGLYKKSPPEGNVLVRVCKCIGFAISNRWTNSKKSPKRSHWLDWAEEKYSKRLIQE) are cytoplasmic. Residues 281–301 (IKMVCRVLVLYIPLPMFWALF) traverse the membrane as a helical segment. The Extracellular portion of the chain corresponds to 302–334 (DQQGSRWTLQATRMNMDFGGGFIIKPDQMQMLN). The helical transmembrane segment at 335-355 (ALLILVFIPIFDMGIYPLVGL) threads the bilayer. Residues 356 to 367 (CRIKLTPLKKMA) are Cytoplasmic-facing. The chain crosses the membrane as a helical span at residues 368 to 388 (TGMILAALAFCAATAVEVYVI). Residues 389–594 (KTVVEPPPAK…QANNIHIGWQ (206 aa)) are Extracellular-facing. The tract at residues 389-594 (KTVVEPPPAK…QANNIHIGWQ (206 aa)) is extracellular domain (ECD). 3 N-linked (GlcNAc...) asparagine glycosylation sites follow: Asn481, Asn513, and Asn532. The chain crosses the membrane as a helical span at residues 595 to 615 (IPQYVFLTAGEVMFSITGLEF). At 616-626 (SYSQAPASMKS) the chain is on the cytoplasmic side. Residues 627-647 (VLQAGWLMTVAFGNVIVLIVA) form a helical membrane-spanning segment. Residues 648-657 (EGAGMEQWVE) are Extracellular-facing. Residues 658-678 (FLLFAALLVAVSIIFSIMAYF) form a helical membrane-spanning segment. Residues 679–719 (YTYVDPDQLDKLFKEDGDGGKVESSKKDELSLGDMPKQTKM) are Cytoplasmic-facing. The span at 695 to 708 (GDGGKVESSKKDEL) shows a compositional bias: basic and acidic residues. The segment at 695 to 719 (GDGGKVESSKKDELSLGDMPKQTKM) is disordered.

Belongs to the major facilitator superfamily. Proton-dependent oligopeptide transporter (POT/PTR) (TC 2.A.17) family. In terms of tissue distribution, expressed in kidney, brain and gut. Also expressed weakly in eye, gill and skeletal muscle.

The protein resides in the apical cell membrane. It is found in the cytoplasmic vesicle. It localises to the phagosome membrane. The protein localises to the cell membrane. It carries out the reaction a dipeptide(out) + 2 H(+)(out) = a dipeptide(in) + 2 H(+)(in). It catalyses the reaction N-acetyl-D-muramoyl-L-alanyl-D-isoglutamine(out) + 3 H(+)(out) = N-acetyl-D-muramoyl-L-alanyl-D-isoglutamine(in) + 3 H(+)(in). The enzyme catalyses glycyl-L-leucine(out) + 2 H(+)(out) = glycyl-L-leucine(in) + 2 H(+)(in). The catalysed reaction is glycyl-L-lysine(out) + 2 H(+)(out) = glycyl-L-lysine(in) + 2 H(+)(in). It carries out the reaction glycyl-L-glutamate(out) + 3 H(+)(out) = glycyl-L-glutamate(in) + 3 H(+)(in). It catalyses the reaction L-alanyl-L-alanine(out) + 2 H(+)(out) = L-alanyl-L-alanine(in) + 2 H(+)(in). The enzyme catalyses an L-amino acid tripeptide(out) + 2 H(+)(out) = an L-amino acid tripeptide(in) + 2 H(+)(in). The catalysed reaction is carnosine(out) + 2 H(+)(out) = carnosine(in) + 2 H(+)(in). Functionally, proton-coupled amino-acid transporter that transports oligopeptides of 2 to 4 amino acids with a preference for dipeptides. Transports neutral and anionic dipeptides with a proton to peptide stoichiometry of 2:1 or 3:1. The protein is Solute carrier family 15 member 2 of Danio rerio (Zebrafish).